We begin with the raw amino-acid sequence, 571 residues long: Exodeoxyribonuclease 1 (571 aa).

Residues 1 to 96 (MGIKGLLGLL…STEQKRKERR (96 aa)) are N-domain. Positions 30, 78, 150, 152, 171, 173, and 225 each coordinate Mg(2+). The interval 114 to 245 (QAIMQFSRCV…KTALRYLQKY (132 aa)) is I-domain. 2 disordered regions span residues 464–489 (KEIDEQVPSQSNNTTPTSAKSDSASP) and 530–559 (RKNHASLPSRRIVYKPPSSPSTPISMNPRP). Over residues 470-489 (VPSQSNNTTPTSAKSDSASP) the composition is skewed to polar residues.

The protein belongs to the XPG/RAD2 endonuclease family. EXO1 subfamily. As to quaternary structure, monomer. The cofactor is Mg(2+).

Its subcellular location is the nucleus. In terms of biological role, 5'-&gt;3' double-stranded DNA exonuclease that could act in a pathway that corrects mismatched base pairs. The sequence is that of Exodeoxyribonuclease 1 (exo1) from Schizosaccharomyces pombe (strain 972 / ATCC 24843) (Fission yeast).